Reading from the N-terminus, the 88-residue chain is Meiosis expressed gene 1 protein homolog (88 aa).

It belongs to the MEIG1 family. In terms of assembly, interacts with PACRG. Interacts with MORN3.

Essential for spermiogenesis. The polypeptide is Meiosis expressed gene 1 protein homolog (Homo sapiens (Human)).